Here is a 1342-residue protein sequence, read N- to C-terminus: DNA-directed RNA polymerase subunit beta (1342 aa).

Belongs to the RNA polymerase beta chain family. The RNAP catalytic core consists of 2 alpha, 1 beta, 1 beta' and 1 omega subunit. When a sigma factor is associated with the core the holoenzyme is formed, which can initiate transcription.

It catalyses the reaction RNA(n) + a ribonucleoside 5'-triphosphate = RNA(n+1) + diphosphate. In terms of biological role, DNA-dependent RNA polymerase catalyzes the transcription of DNA into RNA using the four ribonucleoside triphosphates as substrates. This chain is DNA-directed RNA polymerase subunit beta, found in Salmonella choleraesuis (strain SC-B67).